A 156-amino-acid chain; its full sequence is ATP synthase subunit b (156 aa).

The helical transmembrane segment at 7-27 (LIGQLIAFALFVAFCMKFVWP) threads the bilayer.

Belongs to the ATPase B chain family. As to quaternary structure, F-type ATPases have 2 components, F(1) - the catalytic core - and F(0) - the membrane proton channel. F(1) has five subunits: alpha(3), beta(3), gamma(1), delta(1), epsilon(1). F(0) has three main subunits: a(1), b(2) and c(10-14). The alpha and beta chains form an alternating ring which encloses part of the gamma chain. F(1) is attached to F(0) by a central stalk formed by the gamma and epsilon chains, while a peripheral stalk is formed by the delta and b chains.

The protein localises to the cell inner membrane. Its function is as follows. F(1)F(0) ATP synthase produces ATP from ADP in the presence of a proton or sodium gradient. F-type ATPases consist of two structural domains, F(1) containing the extramembraneous catalytic core and F(0) containing the membrane proton channel, linked together by a central stalk and a peripheral stalk. During catalysis, ATP synthesis in the catalytic domain of F(1) is coupled via a rotary mechanism of the central stalk subunits to proton translocation. Component of the F(0) channel, it forms part of the peripheral stalk, linking F(1) to F(0). This Actinobacillus pleuropneumoniae serotype 5b (strain L20) protein is ATP synthase subunit b.